An 887-amino-acid polypeptide reads, in one-letter code: Cadherin-1 (887 aa).

The first 26 residues, 1–26 (MGRRWGSPALQRFPVLVLLLLLQVCG), serve as a signal peptide directing secretion. A propeptide spanning residues 27–160 (RRCDEAAPCQ…DPGFLRRQKR (134 aa)) is cleaved from the precursor. Cadherin domains lie at 161 to 268 (DWVI…KPVF), 269 to 381 (IKEV…IPIF), 382 to 493 (NPTM…PPVF), 494 to 599 (VPPI…DNGP), and 600 to 704 (TPEP…RRSY). Over 161–714 (DWVIPPISCL…IVGGLGVPAI (554 aa)) the chain is Extracellular. D263 contributes to the Ca(2+) binding site. N-linked (GlcNAc...) asparagine glycosylation occurs at N291. D294 serves as a coordination point for Ca(2+). A glycan (N-linked (GlcNAc...) asparagine) is linked at N346. N-linked (GlcNAc...) asparagine glycans are attached at residues N564 and N643. A helical membrane pass occupies residues 715-735 (LGILGGILALLILLLLLLLFA). The Cytoplasmic segment spans residues 736-887 (RRRKVEKEPL…ELYGGGEDDE (152 aa)). The interval 745–770 (LLPPEDDMRDNVYNYDEEGGGEEDQD) is disordered. Residues 759 to 770 (YDEEGGGEEDQD) show a composition bias toward acidic residues.

Homodimer. Interacts with CTNNA2. Expressed in the liver.

Its subcellular location is the cell junction. The protein localises to the adherens junction. It is found in the cell membrane. It localises to the endosome. The protein resides in the golgi apparatus. Its subcellular location is the trans-Golgi network. The protein localises to the cytoplasm. It is found in the desmosome. Functionally, cadherins are calcium-dependent cell adhesion proteins. They preferentially interact with themselves in a homophilic manner in connecting cells; cadherins may thus contribute to the sorting of heterogeneous cell types. Promotes organization of radial actin fiber structure and cellular response to contractile forces, via anchoring of radial actin fibers to CDH1 junction complexes at the cell membrane. E-cadherin is a ligand for integrin alpha-E/beta-7. The sequence is that of Cadherin-1 (CDH1) from Gallus gallus (Chicken).